We begin with the raw amino-acid sequence, 566 residues long: uncharacterized protein (566 aa).

The protein belongs to the protein kinase superfamily. ADCK protein kinase family.

This is an uncharacterized protein from Synechocystis sp. (strain ATCC 27184 / PCC 6803 / Kazusa).